Reading from the N-terminus, the 347-residue chain is L-threonine 3-dehydrogenase (347 aa).

Cys-43 contributes to the Zn(2+) binding site. Residues Thr-45 and His-48 each act as charge relay system in the active site. His-68, Glu-69, Cys-98, Cys-101, Cys-104, and Cys-112 together coordinate Zn(2+). Residues Ile-180, Asp-200, Arg-205, 267 to 269, and 292 to 293 each bind NAD(+); these read LSL and IT.

It belongs to the zinc-containing alcohol dehydrogenase family. Homotetramer. It depends on Zn(2+) as a cofactor.

The protein localises to the cytoplasm. It carries out the reaction L-threonine + NAD(+) = (2S)-2-amino-3-oxobutanoate + NADH + H(+). It participates in amino-acid degradation; L-threonine degradation via oxydo-reductase pathway; glycine from L-threonine: step 1/2. Its function is as follows. Catalyzes the NAD(+)-dependent oxidation of L-threonine to 2-amino-3-ketobutyrate. In Bacillus subtilis (strain 168), this protein is L-threonine 3-dehydrogenase.